A 250-amino-acid polypeptide reads, in one-letter code: Probable transcriptional regulatory protein DP2908 (250 aa).

The protein belongs to the TACO1 family.

Its subcellular location is the cytoplasm. This is Probable transcriptional regulatory protein DP2908 from Desulfotalea psychrophila (strain LSv54 / DSM 12343).